We begin with the raw amino-acid sequence, 56 residues long: Male-specific sperm protein Mst87F (56 aa).

This sequence belongs to the MST(3)CGP family. As to expression, testis.

This chain is Male-specific sperm protein Mst87F (Mst87F), found in Drosophila melanogaster (Fruit fly).